The primary structure comprises 442 residues: MFS transporter asaE (442 aa).

The segment covering methionine 1–glycine 10 has biased composition (polar residues). Residues methionine 1–proline 43 are disordered. Residues arginine 17–glycine 34 show a composition bias toward basic and acidic residues. Transmembrane regions (helical) follow at residues leucine 47–valine 67, threonine 89–glycine 109, tyrosine 119–threonine 139, isoleucine 150–tryptophan 170, isoleucine 177–valine 197, phenylalanine 206–valine 226, proline 252–isoleucine 272, leucine 288–alanine 307, isoleucine 319–threonine 339, alanine 342–serine 362, leucine 381–leucine 401, and isoleucine 413–glycine 433.

The protein belongs to the major facilitator superfamily. Monocarboxylate porter (TC 2.A.1.13) family.

The protein localises to the cell membrane. The protein operates within secondary metabolite biosynthesis. MFS transporter; part of the gene cluster that mediates the biosynthesis of aspergillic acid. Probably involved in aspergillic acid metabolism and transport. The protein is MFS transporter asaE of Aspergillus flavus (strain ATCC 200026 / FGSC A1120 / IAM 13836 / NRRL 3357 / JCM 12722 / SRRC 167).